Reading from the N-terminus, the 382-residue chain is Alanine racemase 1 (382 aa).

K39 functions as the Proton acceptor; specific for D-alanine in the catalytic mechanism. N6-(pyridoxal phosphate)lysine is present on K39. Residue R138 participates in substrate binding. Y265 serves as the catalytic Proton acceptor; specific for L-alanine. M312 serves as a coordination point for substrate.

It belongs to the alanine racemase family. The cofactor is pyridoxal 5'-phosphate.

It catalyses the reaction L-alanine = D-alanine. It participates in amino-acid biosynthesis; D-alanine biosynthesis; D-alanine from L-alanine: step 1/1. In terms of biological role, catalyzes the interconversion of L-alanine and D-alanine. May also act on other amino acids. The chain is Alanine racemase 1 (alr1) from Staphylococcus aureus (strain MRSA252).